We begin with the raw amino-acid sequence, 420 residues long: Putative transporter AmpG 3 (420 aa).

The next 12 helical transmembrane spans lie at 6-26 (YLIG…LIFF), 41-61 (IVGS…WSPF), 79-99 (GWAL…LKRS), 104-124 (LCIT…QDIV), 141-161 (IAFT…SVGA), 166-186 (IIFG…VGPI), 230-250 (LLLI…PMAM), 274-294 (LLIM…IGIF), 297-317 (VLIG…LATI), 324-344 (FIIT…IISI), 359-381 (YSIS…GICA), and 386-406 (WPVF…IFYI).

This sequence belongs to the major facilitator superfamily.

Its subcellular location is the cell inner membrane. The chain is Putative transporter AmpG 3 (ampG3) from Rickettsia typhi (strain ATCC VR-144 / Wilmington).